The chain runs to 222 residues: Probable transaldolase (222 aa).

Lys-91 serves as the catalytic Schiff-base intermediate with substrate.

Belongs to the transaldolase family. Type 3B subfamily.

It localises to the cytoplasm. It catalyses the reaction D-sedoheptulose 7-phosphate + D-glyceraldehyde 3-phosphate = D-erythrose 4-phosphate + beta-D-fructose 6-phosphate. Its pathway is carbohydrate degradation; pentose phosphate pathway; D-glyceraldehyde 3-phosphate and beta-D-fructose 6-phosphate from D-ribose 5-phosphate and D-xylulose 5-phosphate (non-oxidative stage): step 2/3. Its function is as follows. Transaldolase is important for the balance of metabolites in the pentose-phosphate pathway. In Chlorobium phaeovibrioides (strain DSM 265 / 1930) (Prosthecochloris vibrioformis (strain DSM 265)), this protein is Probable transaldolase.